We begin with the raw amino-acid sequence, 368 residues long: Quinolinate synthase (368 aa).

Residues H46 and S63 each contribute to the iminosuccinate site. Residue C110 coordinates [4Fe-4S] cluster. Iminosuccinate contacts are provided by residues 141–143 (YVN) and S162. C230 provides a ligand contact to [4Fe-4S] cluster. Iminosuccinate-binding positions include 256-258 (HPE) and T273. C320 is a [4Fe-4S] cluster binding site.

Belongs to the quinolinate synthase family. Type 3 subfamily. Homotrimer. [4Fe-4S] cluster is required as a cofactor.

Its subcellular location is the cytoplasm. The catalysed reaction is iminosuccinate + dihydroxyacetone phosphate = quinolinate + phosphate + 2 H2O + H(+). It functions in the pathway cofactor biosynthesis; NAD(+) biosynthesis; quinolinate from iminoaspartate: step 1/1. Its function is as follows. Catalyzes the condensation of iminoaspartate with dihydroxyacetone phosphate to form quinolinate. In Bacillus subtilis (strain 168), this protein is Quinolinate synthase.